The sequence spans 436 residues: Serine/threonine-protein kinase STK11 (436 aa).

The residue at position 31 (Ser31) is a Phosphoserine. An N6-acetyllysine mark is found at Lys44 and Lys48. Residues 45-90 (LIGKYLMGDLLGEGSYGKVKEVLDSETLCRRAVKILKKKKLRRIPN) form a sufficient for interaction with SIRT1 region. The 261-residue stretch at 49–309 (YLMGDLLGEG…IRQIRQHSWF (261 aa)) folds into the Protein kinase domain. ATP-binding positions include 55–63 (LGEGSYGKV) and Lys78. Residues Lys96 and Lys97 each carry the N6-acetyllysine modification. Asp176 acts as the Proton acceptor in catalysis. The residue at position 189 (Thr189) is a Phosphothreonine; by autocatalysis. 2 positions are modified to N6-acetyllysine: Lys296 and Lys311. Phosphoserine is present on Ser325. Thr336 carries the phosphothreonine; by autocatalysis modification. Thr366 carries the post-translational modification Phosphothreonine; by ATM and autocatalysis. The tract at residues 397–421 (GTEPQLSSKVKPEGRPGAANPARKV) is disordered. At Ser403 the chain carries Phosphoserine. Residue Lys420 is modified to N6-acetyllysine. The S-palmitoyl cysteine moiety is linked to residue Cys422. Residue Lys426 is modified to N6-acetyllysine. Ser431 is modified (phosphoserine; by autocatalysis, PKA, PKC/PRKCZ and RPS6KA1). Residue Cys433 is modified to Cysteine methyl ester. Cys433 carries S-farnesyl cysteine lipidation. Position 434 is an N6-acetyllysine (Lys434). A propeptide spans 434–436 (KQQ) (removed in mature form).

This sequence belongs to the protein kinase superfamily. CAMK Ser/Thr protein kinase family. LKB1 subfamily. In terms of assembly, catalytic component of a trimeric complex composed of STK11/LKB1, STRAD (STRADA or STRADB) and CAB39/MO25 (CAB39/MO25alpha or CAB39L/MO25beta): the complex tethers STK11/LKB1 in the cytoplasm and stimulates its catalytic activity. Found in a ternary complex composed of SMAD4, STK11/LKB1 and STK11IP. Interacts with NR4A1, p53/TP53, SMAD4, STK11IP and WDR6. Interacts with NISCH; this interaction may increase STK11 activity. Interacts with SIRT1; the interaction deacetylates STK11. Interacts with CDKN1A. Mg(2+) is required as a cofactor. It depends on Mn(2+) as a cofactor. In terms of processing, phosphorylated by ATM at Thr-366 following ionizing radiation (IR). Phosphorylation at Ser-431 by RPS6KA1 and/or some PKA is required to inhibit cell growth. Phosphorylation at Ser-431 is also required during neuronal polarization to mediate phosphorylation of BRSK1 and BRSK2. Phosphorylation by PKC/PRKCZ at Ser-397 in isoform 2 promotes metformin (or peroxynitrite)-induced nuclear export of STK11 and activation of AMPK. UV radiation -induced phosphorylation at Thr-366 mediates CDKN1A degradation. Post-translationally, acetylated. Deacetylation at Lys-48 enhances cytoplasmic localization and kinase activity in vitro. As to expression, expressed in brain, heart, testis, skeletal muscle and spleen, and weakly in liver and kidney. Isoform 1 is expressed at highest levels in the brain. Isoform 2 is expressed at highest levels in the testis, primarily in postmitotic developing germ cells (at protein level).

It is found in the nucleus. It localises to the cytoplasm. Its subcellular location is the membrane. The protein localises to the mitochondrion. The enzyme catalyses L-seryl-[protein] + ATP = O-phospho-L-seryl-[protein] + ADP + H(+). It catalyses the reaction L-threonyl-[protein] + ATP = O-phospho-L-threonyl-[protein] + ADP + H(+). Activated by forming a complex with STRAD (STRADA or STRADB) and CAB39/MO25 (CAB39/MO25alpha or CAB39L/MO25beta): STRADA (or STRADB)-binding promotes a conformational change of STK11/LKB1 in an active conformation, which is stabilized by CAB39/MO25alpha (or CAB39L/MO25beta) interacting with the STK11/LKB1 activation loop. Sequestration in the nucleus by NR4A1 prevents it from phosphorylating and activating cytoplasmic AMPK. In terms of biological role, tumor suppressor serine/threonine-protein kinase that controls the activity of AMP-activated protein kinase (AMPK) family members, thereby playing a role in various processes such as cell metabolism, cell polarity, apoptosis and DNA damage response. Acts by phosphorylating the T-loop of AMPK family proteins, thus promoting their activity: phosphorylates PRKAA1, PRKAA2, BRSK1, BRSK2, MARK1, MARK2, MARK3, MARK4, NUAK1, NUAK2, SIK1, SIK2, SIK3 and SNRK but not MELK. Also phosphorylates non-AMPK family proteins such as STRADA, PTEN and possibly p53/TP53. Acts as a key upstream regulator of AMPK by mediating phosphorylation and activation of AMPK catalytic subunits PRKAA1 and PRKAA2 and thereby regulates processes including: inhibition of signaling pathways that promote cell growth and proliferation when energy levels are low, glucose homeostasis in liver, activation of autophagy when cells undergo nutrient deprivation, and B-cell differentiation in the germinal center in response to DNA damage. Also acts as a regulator of cellular polarity by remodeling the actin cytoskeleton. Required for cortical neuron polarization by mediating phosphorylation and activation of BRSK1 and BRSK2, leading to axon initiation and specification. Involved in DNA damage response: interacts with p53/TP53 and recruited to the CDKN1A/WAF1 promoter to participate in transcription activation. Able to phosphorylate p53/TP53; the relevance of such result in vivo is however unclear and phosphorylation may be indirect and mediated by downstream STK11/LKB1 kinase NUAK1. Also acts as a mediator of p53/TP53-dependent apoptosis via interaction with p53/TP53: translocates to the mitochondrion during apoptosis and regulates p53/TP53-dependent apoptosis pathways. Regulates UV radiation-induced DNA damage response mediated by CDKN1A. In association with NUAK1, phosphorylates CDKN1A in response to UV radiation and contributes to its degradation which is necessary for optimal DNA repair. Functionally, has a role in spermiogenesis. This is Serine/threonine-protein kinase STK11 from Rattus norvegicus (Rat).